The primary structure comprises 350 residues: Protein RecA (350 aa).

An ATP-binding site is contributed by 67-74 (GPESSGKT).

The protein belongs to the RecA family.

Its subcellular location is the cytoplasm. Its function is as follows. Can catalyze the hydrolysis of ATP in the presence of single-stranded DNA, the ATP-dependent uptake of single-stranded DNA by duplex DNA, and the ATP-dependent hybridization of homologous single-stranded DNAs. It interacts with LexA causing its activation and leading to its autocatalytic cleavage. This is Protein RecA from Baumannia cicadellinicola subsp. Homalodisca coagulata.